We begin with the raw amino-acid sequence, 338 residues long: Ferrochelatase (338 aa).

H189 and E293 together coordinate Fe cation.

Belongs to the ferrochelatase family.

The protein localises to the cytoplasm. The catalysed reaction is heme b + 2 H(+) = protoporphyrin IX + Fe(2+). It functions in the pathway porphyrin-containing compound metabolism; protoheme biosynthesis; protoheme from protoporphyrin-IX: step 1/1. Catalyzes the ferrous insertion into protoporphyrin IX. The polypeptide is Ferrochelatase (Azotobacter vinelandii (strain DJ / ATCC BAA-1303)).